Reading from the N-terminus, the 579-residue chain is MINGEQTMVEDELPDQGKPMSDESADIDIKDLKVGESIGSGAYGIVYRGTLFNSDVAIKKIQNEKSEKNEFIKYLKREVAVLKNIQHPNIVQFIGVYYEPLASPSLVNRLLNSSSTWIVTEYIGGGNLHERIKDTKKDFPIELRIKLSLDIALAMAYLHSRDIIFRDLKSKNILIDDSSSPIRGKVCDFGFARILNKKQQGNRHLSICGTDSIMAPELILGMEYDESVDIFSFGVVLLEMILRKKVSKVLERGPQSAFEIDQDSARQLIPDDIPVLYSDLALDCIKYQPEERPNFSHIIHVLKQLTSLFPVVHTFDNPLSPTSSPITPRKNSLNSPFTKSMRMNSFDFNLSNIVSSTSVQNNLKSQNLNFTLLNLNQINNQDLNENNNNNISNNINNINNNNNNLNDCNSNLSSSTSTIYNDSQQTIIDEDELDKEEEENRNKVNNLKEKMLLVMGEFDIYINKVGKELLLVSEEDHISQKYDECRKVIEIKKVLGEVIESDMSNSQQSNTPRKNSNVTNSRVALFLKSMERSLNEIYSSSDVLKQRIVKEDDLVESLLLARVVSKIKKIHLSSLDINN.

The disordered stretch occupies residues 1–24 (MINGEQTMVEDELPDQGKPMSDES). The Protein kinase domain maps to 32-309 (LKVGESIGSG…HVLKQLTSLF (278 aa)). ATP contacts are provided by residues 38-46 (IGSGAYGIV) and Lys-59. The Proton acceptor role is filled by Asp-167.

The protein belongs to the protein kinase superfamily. TKL Ser/Thr protein kinase family.

The catalysed reaction is L-seryl-[protein] + ATP = O-phospho-L-seryl-[protein] + ADP + H(+). The enzyme catalyses L-threonyl-[protein] + ATP = O-phospho-L-threonyl-[protein] + ADP + H(+). In Dictyostelium discoideum (Social amoeba), this protein is Probable serine/threonine-protein kinase kinY (kinY).